The chain runs to 135 residues: Aspartate 1-decarboxylase (135 aa).

The Schiff-base intermediate with substrate; via pyruvic acid role is filled by S25. S25 is subject to Pyruvic acid (Ser). Position 57 (T57) interacts with substrate. Catalysis depends on Y58, which acts as the Proton donor. Position 73–75 (73–75) interacts with substrate; that stretch reads GAA.

The protein belongs to the PanD family. Heterooctamer of four alpha and four beta subunits. The cofactor is pyruvate. Is synthesized initially as an inactive proenzyme, which is activated by self-cleavage at a specific serine bond to produce a beta-subunit with a hydroxyl group at its C-terminus and an alpha-subunit with a pyruvoyl group at its N-terminus.

Its subcellular location is the cytoplasm. The catalysed reaction is L-aspartate + H(+) = beta-alanine + CO2. The protein operates within cofactor biosynthesis; (R)-pantothenate biosynthesis; beta-alanine from L-aspartate: step 1/1. Functionally, catalyzes the pyruvoyl-dependent decarboxylation of aspartate to produce beta-alanine. The chain is Aspartate 1-decarboxylase from Mycolicibacterium vanbaalenii (strain DSM 7251 / JCM 13017 / BCRC 16820 / KCTC 9966 / NRRL B-24157 / PYR-1) (Mycobacterium vanbaalenii).